Reading from the N-terminus, the 509-residue chain is 5-hydroxytryptamine receptor (509 aa).

Residues 1-99 (MANFTFGDLA…YSHEHLVLTS (99 aa)) are Extracellular-facing. 6 N-linked (GlcNAc...) asparagine glycosylation sites follow: Asn3, Asn47, Asn58, Asn68, Asn72, and Asn78. A helical transmembrane segment spans residues 100–122 (VILGLFVLCCIIGNCFVIAAVML). Over 123 to 132 (ERSLHNVANY) the chain is Cytoplasmic. A helical membrane pass occupies residues 133–154 (LILSLAVADLMVAVLVMPLSVV). Residues 155 to 169 (SEISKVWFLHSEVCD) lie on the Extracellular side of the membrane. Cysteines 168 and 246 form a disulfide. The chain crosses the membrane as a helical span at residues 170 to 191 (MWISVDVLCCTASILHLVAIAM). Residues 192-210 (DRYWAVTSIDYIRRRSARR) lie on the Cytoplasmic side of the membrane. Residues 211–233 (ILLMIMVVWIVALFISIPPLFGW) traverse the membrane as a helical segment. Topologically, residues 234-259 (RDPNNDPDKTGTCIISQDKGYTIFST) are extracellular. A helical transmembrane segment spans residues 260 to 281 (VGAFYLPMLVMMIIYIRIWLVA). Residues 282–432 (RSRIRKDKFQ…LKRERKAART (151 aa)) are Cytoplasmic-facing. The segment at 323–372 (SPDSTTEKKKRRAPFKSYGCSPRPERKKNRAKKLPENANGVNSNSSSSER) is disordered. The helical transmembrane segment at 433–456 (LAIITGAFLICWLPFFIIALIGPF) threads the bilayer. Residues 457–465 (VDPEGIPPF) are Extracellular-facing. Residues 466–488 (ARSFVLWLGYFNSLLNPIIYTIF) form a helical membrane-spanning segment. Over 489–509 (SPEFRSAFQKILFGKYRRGHR) the chain is Cytoplasmic.

The protein belongs to the G-protein coupled receptor 1 family.

The protein resides in the cell membrane. Its function is as follows. This is a receptor for 5-hydroxytryptamine (serotonin), a biogenic hormone that function as a neurotransmitter, a hormone, and a mitogen. The sequence is that of 5-hydroxytryptamine receptor from Lymnaea stagnalis (Great pond snail).